The chain runs to 408 residues: LL-diaminopimelate aminotransferase (408 aa).

2 residues coordinate substrate: Y15 and G42. Residues Y72, 108–109, Y132, N187, Y218, and 246–248 each bind pyridoxal 5'-phosphate; these read SK and SFS. Residues K109, Y132, and N187 each contribute to the substrate site. K249 bears the N6-(pyridoxal phosphate)lysine mark. Residues R257 and N292 each coordinate pyridoxal 5'-phosphate. The substrate site is built by N292 and R388.

It belongs to the class-I pyridoxal-phosphate-dependent aminotransferase family. LL-diaminopimelate aminotransferase subfamily. In terms of assembly, homodimer. It depends on pyridoxal 5'-phosphate as a cofactor.

The catalysed reaction is (2S,6S)-2,6-diaminopimelate + 2-oxoglutarate = (S)-2,3,4,5-tetrahydrodipicolinate + L-glutamate + H2O + H(+). It participates in amino-acid biosynthesis; L-lysine biosynthesis via DAP pathway; LL-2,6-diaminopimelate from (S)-tetrahydrodipicolinate (aminotransferase route): step 1/1. In terms of biological role, involved in the synthesis of meso-diaminopimelate (m-DAP or DL-DAP), required for both lysine and peptidoglycan biosynthesis. Catalyzes the direct conversion of tetrahydrodipicolinate to LL-diaminopimelate. In Prochlorococcus marinus (strain MIT 9312), this protein is LL-diaminopimelate aminotransferase.